The following is a 274-amino-acid chain: NH(3)-dependent NAD(+) synthetase (274 aa).

27–34 is an ATP binding site; sequence GLSGGIDS. Aspartate 33 is a binding site for Mg(2+). Arginine 121 is a deamido-NAD(+) binding site. Residue threonine 141 coordinates ATP. A Mg(2+)-binding site is contributed by glutamate 146. ATP-binding residues include lysine 170 and serine 192.

The protein belongs to the NAD synthetase family. In terms of assembly, homodimer.

The catalysed reaction is deamido-NAD(+) + NH4(+) + ATP = AMP + diphosphate + NAD(+) + H(+). It functions in the pathway cofactor biosynthesis; NAD(+) biosynthesis; NAD(+) from deamido-NAD(+) (ammonia route): step 1/1. In terms of biological role, catalyzes the ATP-dependent amidation of deamido-NAD to form NAD. Uses ammonia as a nitrogen source. The protein is NH(3)-dependent NAD(+) synthetase of Helicobacter hepaticus (strain ATCC 51449 / 3B1).